We begin with the raw amino-acid sequence, 429 residues long: Adenylosuccinate synthetase (429 aa).

GTP contacts are provided by residues 13–19 (GDEGKGK) and 41–43 (GHT). The active-site Proton acceptor is Asp14. Asp14 and Gly41 together coordinate Mg(2+). IMP contacts are provided by residues 14 to 17 (DEGK), 39 to 42 (NAGH), Thr130, Arg144, Gln225, Thr240, and Arg304. The active-site Proton donor is the His42. 300 to 306 (ATTGRAR) contacts substrate. Residues Arg306, 332-334 (KLD), and 413-415 (STG) contribute to the GTP site.

It belongs to the adenylosuccinate synthetase family. In terms of assembly, homodimer. Mg(2+) is required as a cofactor.

It localises to the cytoplasm. It catalyses the reaction IMP + L-aspartate + GTP = N(6)-(1,2-dicarboxyethyl)-AMP + GDP + phosphate + 2 H(+). It functions in the pathway purine metabolism; AMP biosynthesis via de novo pathway; AMP from IMP: step 1/2. Functionally, plays an important role in the de novo pathway of purine nucleotide biosynthesis. Catalyzes the first committed step in the biosynthesis of AMP from IMP. This chain is Adenylosuccinate synthetase, found in Pseudomonas fluorescens (strain SBW25).